Consider the following 310-residue polypeptide: Protein A56 (310 aa).

Residues 1–16 form the signal peptide; that stretch reads MKQLSIVILLLSIVYT. At 17–275 the chain is on the virion surface side; it reads TKPHPTQISK…TKYTTSDFIE (259 aa). The Ig-like V-type domain maps to 19–121; it reads PHPTQISKKL…TNDTDKIDYE (103 aa). An intrachain disulfide couples Cys36 to Cys105. Residues Asn39, Asn113, and Asn133 are each glycosylated (N-linked (GlcNAc...) asparagine; by host). The tract at residues 153–195 is disordered; that stretch reads HTEEQHDSDTTICTSESTTQISETSESTTSSQISETSESTSYG. The span at 162–193 shows a compositional bias: low complexity; it reads TTICTSESTTQISETSESTTSSQISETSESTS. N-linked (GlcNAc...) asparagine; by host glycosylation is present at Asn203. Residues 276–300 traverse the membrane as a helical segment; it reads IFGIVSLILLLAVAIFCIIYYFCSG. The Intravirion portion of the chain corresponds to 301–310; the sequence is RSRKQETNIL.

Heterodimerizes with K2. The heterodimer A56/K2 interacts with components of the entry fusion complex A16 and G9. Interacts with K2 protein. Heterodimer with C3/VPC protein; disulfide-linked. Glycosylated; contains phosphate and sulfate-substituted glycans. O-glycosylation is required for hemagglutination and hemadsorption activities of infected cell membranes.

It is found in the virion membrane. Its subcellular location is the host membrane. Prevents cell to cell fusion by interacting with and directing the viral K2 protein on the host plasma membrane. The A56-K2 complex associates with components of the entry fusion complex (EFC) presumably to avoid superinfection and syncytium formation. Via its interaction with C3/VCP protein, protects the infected cell and probably also the extracellular enveloped virus from complement attack. The chain is Protein A56 (HA) from Raccoon poxvirus (RCN).